Reading from the N-terminus, the 614-residue chain is Probable peptide-binding protein YejA (614 aa).

The signal sequence occupies residues 1-27; the sequence is MILAPLKSRILIALAASALLIPAVASA.

It belongs to the bacterial solute-binding protein 5 family. In terms of assembly, the complex is composed of one ATP-binding protein (YejF), two transmembrane proteins (YejB and YejE) and a solute-binding protein (YejA).

The protein localises to the periplasm. Probably part of the ABC transporter complex YejABEF, which is likely involved in broad-spectrum peptide import. The chain is Probable peptide-binding protein YejA from Agrobacterium fabrum (strain C58 / ATCC 33970) (Agrobacterium tumefaciens (strain C58)).